The sequence spans 163 residues: Transcription elongation factor GreA (163 aa).

Residues 49–80 (ENAEYDAARDRQSEVERRILELERILENAEII) are a coiled coil.

The protein belongs to the GreA/GreB family.

Its function is as follows. Necessary for efficient RNA polymerase transcription elongation past template-encoded arresting sites. The arresting sites in DNA have the property of trapping a certain fraction of elongating RNA polymerases that pass through, resulting in locked ternary complexes. Cleavage of the nascent transcript by cleavage factors such as GreA or GreB allows the resumption of elongation from the new 3'terminus. GreA releases sequences of 2 to 3 nucleotides. The chain is Transcription elongation factor GreA from Mycoplasmopsis agalactiae (strain NCTC 10123 / CIP 59.7 / PG2) (Mycoplasma agalactiae).